Consider the following 567-residue polypeptide: uncharacterized protein (567 aa).

10 helical membrane-spanning segments follow: residues 65–85, 92–112, 190–210, 220–240, 302–322, 353–373, 412–432, 434–454, 473–493, and 503–523; these read LSLF…PSVA, LWYV…FFLI, WQWF…ACLP, VATY…LAYG, AIVM…IIVA, LGIL…ALIA, IISI…DAVF, VGAV…VFFT, IGLL…FPSV, and WTCL…AISA.

This sequence belongs to the amino acid-polyamine-organocation (APC) superfamily.

The protein resides in the membrane. This is an uncharacterized protein from Schizosaccharomyces pombe (strain 972 / ATCC 24843) (Fission yeast).